The sequence spans 442 residues: Sexual development regulator VELC (442 aa).

Disordered regions lie at residues 1-192 (MPVH…ASLA) and 396-442 (KKGN…IRRS). The span at 45–54 (IAPPPPPTPP) shows a compositional bias: pro residues. Over residues 79–97 (PGPRRPSNPSSPQHPQQPG) the composition is skewed to low complexity. In terms of domain architecture, Velvet spans 213–396 (FSTSEYHLHV…KEQGCLISIK (184 aa)). The segment covering 401-411 (KGGGGGGGGPS) has biased composition (gly residues). Positions 433 to 442 (AGKRKRIRRS) are enriched in basic residues.

This sequence belongs to the velvet family. VelC subfamily.

It localises to the nucleus. In terms of biological role, velvet-domain-containing protein that acts as a positive regulator of sexual development. Plays an important role in pathogenicity through regulating positively appressorium-mediated penetration and invasive growth. The protein is Sexual development regulator VELC of Pyricularia oryzae (strain 70-15 / ATCC MYA-4617 / FGSC 8958) (Rice blast fungus).